We begin with the raw amino-acid sequence, 610 residues long: T-cell immunomodulatory protein (610 aa).

The signal sequence occupies residues 1 to 32; it reads MAAGLLPSARAVLALLFLGLALLSVGPAPAQA. Residues N35, N94, N123, N138, N145, N150, N175, and N241 are each glycosylated (N-linked (GlcNAc...) asparagine). Residues 98-135 form an FG-GAP 1; atypical repeat; the sequence is LVTSVVPGDYDGDSQMDVLLTYFPQNHSNNELGAVIFW. One copy of the FG-GAP 2; atypical repeat lies at 153–183; the sequence is FHDQPLIMDFNGDLIPDVFAITNESSQPQIL. The stretch at 256 to 291 is one FG-GAP 3; atypical repeat; that stretch reads VVGQSAFADFDGDGHMDHLLPGCEDKDCQKSAIYLM. N-linked (GlcNAc...) asparagine glycans are attached at residues N351, N369, and N480. The helical transmembrane segment at 564–584 threads the bilayer; the sequence is IVLLTAVALTGVCVFILAIIA.

This sequence belongs to the TIP family. Interacts with RUVBL1, RUVBL2 and alpha-tubulin.

The protein localises to the secreted. The protein resides in the cell membrane. Its function is as follows. Modulator of T-cell function. Has a protective effect in graft versus host disease model. In Rattus norvegicus (Rat), this protein is T-cell immunomodulatory protein.